A 371-amino-acid polypeptide reads, in one-letter code: Lysine racemase (371 aa).

The active-site Proton acceptor is the K39. Position 39 is an N6-(pyridoxal phosphate)lysine (K39). Residue R135 participates in substrate binding. Y266 acts as the Proton acceptor in catalysis. M313 serves as a coordination point for substrate.

This sequence belongs to the alanine racemase family. Homodimer. It depends on pyridoxal 5'-phosphate as a cofactor.

The enzyme catalyses L-lysine = D-lysine. Catalyzes the interconversion of D-lysine and L-lysine. Can also use arginine and ornithine, but not alanine. In Oenococcus oeni (strain ATCC BAA-331 / PSU-1), this protein is Lysine racemase.